A 302-amino-acid polypeptide reads, in one-letter code: Uricase (302 aa).

Active-site charge relay system residues include K22 and T67. 6 residues coordinate urate: T67, D68, F163, R180, Q223, and N249. Catalysis depends on H251, which acts as the Charge relay system.

Belongs to the uricase family. As to quaternary structure, homotetramer.

The catalysed reaction is urate + O2 + H2O = 5-hydroxyisourate + H2O2. It functions in the pathway purine metabolism; urate degradation; (S)-allantoin from urate: step 1/3. In terms of biological role, catalyzes the oxidation of uric acid to 5-hydroxyisourate, which is further processed to form (S)-allantoin. The protein is Uricase (uox) of Arthrobacter globiformis.